A 448-amino-acid polypeptide reads, in one-letter code: Glutamate--tRNA ligase (448 aa).

The 'HIGH' region motif lies at 10-20 (PSPTGFLHIGN). Positions 214–218 (KLSKR) match the 'KMSKS' region motif. Residue Lys217 coordinates ATP.

The protein belongs to the class-I aminoacyl-tRNA synthetase family. Glutamate--tRNA ligase type 1 subfamily. In terms of assembly, monomer.

The protein resides in the cytoplasm. The enzyme catalyses tRNA(Glu) + L-glutamate + ATP = L-glutamyl-tRNA(Glu) + AMP + diphosphate. Catalyzes the attachment of glutamate to tRNA(Glu) in a two-step reaction: glutamate is first activated by ATP to form Glu-AMP and then transferred to the acceptor end of tRNA(Glu). In Phytoplasma australiense, this protein is Glutamate--tRNA ligase.